We begin with the raw amino-acid sequence, 514 residues long: ATP synthase subunit alpha (514 aa).

Residue 170–177 (GDRQTGKT) participates in ATP binding.

It belongs to the ATPase alpha/beta chains family. As to quaternary structure, F-type ATPases have 2 components, CF(1) - the catalytic core - and CF(0) - the membrane proton channel. CF(1) has five subunits: alpha(3), beta(3), gamma(1), delta(1), epsilon(1). CF(0) has three main subunits: a(1), b(2) and c(9-12). The alpha and beta chains form an alternating ring which encloses part of the gamma chain. CF(1) is attached to CF(0) by a central stalk formed by the gamma and epsilon chains, while a peripheral stalk is formed by the delta and b chains.

Its subcellular location is the cell inner membrane. It catalyses the reaction ATP + H2O + 4 H(+)(in) = ADP + phosphate + 5 H(+)(out). Produces ATP from ADP in the presence of a proton gradient across the membrane. The alpha chain is a regulatory subunit. The protein is ATP synthase subunit alpha of Psychrobacter cryohalolentis (strain ATCC BAA-1226 / DSM 17306 / VKM B-2378 / K5).